Here is a 422-residue protein sequence, read N- to C-terminus: Glycine amidinotransferase, mitochondrial (422 aa).

Residues aspartate 253 and histidine 302 contribute to the active site. Residue cysteine 406 is the Amidino-cysteine intermediate of the active site.

The protein belongs to the amidinotransferase family. As to quaternary structure, homodimer. Strongly expressed in neurons and glia of the brain, the lamina propria, submucosa and serosa of the small intestine, in oocytes and on the fringes of the pancreas. Not expressed in the retina, eye lens, heart or bulbus arteriosus. Expressed in the yolk syncytial layer in gastrula stage embryos, in the yolk syncytial layer and mature somites in early segmentation embryos and in the yolk syncytial layer and the liver of long-pec stage (48 hours post-fertilization) embryos.

It is found in the mitochondrion inner membrane. The catalysed reaction is L-arginine + glycine = guanidinoacetate + L-ornithine. Its pathway is amine and polyamine biosynthesis; creatine biosynthesis; creatine from L-arginine and glycine: step 1/2. Functionally, catalyzes the biosynthesis of guanidinoacetate, the immediate precursor of creatine. Creatine plays a vital role in energy metabolism in muscle tissues. May play a role in embryonic and central nervous system development. The sequence is that of Glycine amidinotransferase, mitochondrial from Danio rerio (Zebrafish).